A 2410-amino-acid polypeptide reads, in one-letter code: Reducing polyketide synthase FUB1 (2410 aa).

Over residues M1–G42 the composition is skewed to low complexity. The interval M1–V52 is disordered. The Ketosynthase family 3 (KS3) domain maps to S57–D479. Catalysis depends on for beta-ketoacyl synthase activity residues C230, H365, and H403. The interval T608–A929 is malonyl-CoA:ACP transacylase (MAT) domain. S699 serves as the catalytic For malonyltransferase activity. The segment at L994–D1127 is N-terminal hotdog fold. In terms of domain architecture, PKS/mFAS DH spans L994–S1307. A dehydratase (DH) domain region spans residues E995 to R1302. The active-site Proton acceptor; for dehydratase activity is the H1026. The segment at L1155–S1307 is C-terminal hotdog fold. D1220 acts as the Proton donor; for dehydratase activity in catalysis. The enoyl reductase (ER) domain stretch occupies residues G1714–L2026. Residues A2050 to V2226 form a ketoreductase (KR) domain region. One can recognise a Carrier domain in the interval E2329–S2406. S2366 carries the post-translational modification O-(pantetheine 4'-phosphoryl)serine.

It functions in the pathway mycotoxin biosynthesis. In terms of biological role, reducing polyketide synthase; part of the gene cluster that mediates the biosynthesis of fusaric acid, a mycotoxin with low to moderate toxicity to animals and humans, but with high phytotoxic properties. L-aspartate is suggested as fusaric acid amino acid precursor that is activated and further processed to O-acetyl-L-homoserine by cluster enzymes aspartate kinase FUB3 and homoserine O-acetyltransferase FUB5, as well as enzymes of the primary metabolism. The polyketide synthase (PKS) FUB1 generates the triketide trans-2-hexenal which is presumptively released by the hydrolase FUB4 and linked to the NRPS-bound amino acid precursor by NAD(P)-dependent dehydrogenase FUB6. FUB1, FUB4, and the non-canonical NRPS Fub8 may form an enzyme complex. Further processing of the NRPS-bound intermediate might be carried out by FUB6 and the sulfhydrylase FUB7, enabling a spontaneous electrocyclization to close the carbon backbone of fusaric acid. Dihydrofusaric acid is likely to be released via reduction by the thioester reductase (TR) domain of FUB8 whereupon the final oxidation to fusaric acid may (also) be performed by the FMN-dependent dehydrogenase FUB9. This Gibberella fujikuroi (strain CBS 195.34 / IMI 58289 / NRRL A-6831) (Bakanae and foot rot disease fungus) protein is Reducing polyketide synthase FUB1.